A 74-amino-acid chain; its full sequence is Antimicrobial peptide AcrAP1 (74 aa).

A signal peptide spans 1 to 22 (MEIKYLLTVFLVLLIVSDHCQA). Lysine 40 is modified (lysine amide). Residues 46–74 (DLDGQIDRFRNFRKRDAELEELLSKLPIY) constitute a propeptide that is removed on maturation.

It belongs to the non-disulfide-bridged peptide (NDBP) superfamily. Short antimicrobial peptide (group 4) family. As to expression, expressed by the venom gland.

The protein localises to the secreted. The protein resides in the target cell membrane. Has antimicrobial activity against the Gram-positive bacteria S.aureus (MIC=8 uM) and the yeast C.albicans (MIC=16 uM). Causes hemolysis on horse erythrocytes (64 uM for 100% hemolysis). Minimum bactericidal concentrations have also been tested against S.aureus and is four-fold higher (MBC=32 uM). In Androctonus crassicauda (Arabian fat-tailed scorpion), this protein is Antimicrobial peptide AcrAP1.